Consider the following 466-residue polypeptide: Asparagine--tRNA ligase (466 aa).

This sequence belongs to the class-II aminoacyl-tRNA synthetase family. As to quaternary structure, homodimer.

Its subcellular location is the cytoplasm. The catalysed reaction is tRNA(Asn) + L-asparagine + ATP = L-asparaginyl-tRNA(Asn) + AMP + diphosphate + H(+). This is Asparagine--tRNA ligase from Photorhabdus laumondii subsp. laumondii (strain DSM 15139 / CIP 105565 / TT01) (Photorhabdus luminescens subsp. laumondii).